Reading from the N-terminus, the 602-residue chain is RecBCD enzyme subunit RecD (602 aa).

174–181 (GGPGTGKT) serves as a coordination point for ATP.

The protein belongs to the RecD family. Heterotrimer of RecB, RecC and RecD. All subunits contribute to DNA-binding.

The catalysed reaction is Couples ATP hydrolysis with the unwinding of duplex DNA at the replication fork by translocating in the 5'-3' direction. This creates two antiparallel DNA single strands (ssDNA). The leading ssDNA polymer is the template for DNA polymerase III holoenzyme which synthesizes a continuous strand.. The enzyme catalyses ATP + H2O = ADP + phosphate + H(+). Its function is as follows. A helicase/nuclease that prepares dsDNA breaks (DSB) for recombinational DNA repair. Binds to DSBs and unwinds DNA via a highly rapid and processive ATP-dependent bidirectional helicase activity. Unwinds dsDNA until it encounters a Chi (crossover hotspot instigator) sequence from the 3' direction. Cuts ssDNA a few nucleotides 3' to the Chi site. The properties and activities of the enzyme are changed at Chi. The Chi-altered holoenzyme produces a long 3'-ssDNA overhang and facilitates RecA-binding to the ssDNA for homologous DNA recombination and repair. Holoenzyme degrades any linearized DNA that is unable to undergo homologous recombination. In the holoenzyme this subunit has ssDNA-dependent ATPase and 5'-3' helicase activity. When added to pre-assembled RecBC greatly stimulates nuclease activity and augments holoenzyme processivity. Negatively regulates the RecA-loading ability of RecBCD. The sequence is that of RecBCD enzyme subunit RecD from Buchnera aphidicola subsp. Schizaphis graminum (strain Sg).